Reading from the N-terminus, the 478-residue chain is Transposase for insertion sequence element IS231E (478 aa).

The protein belongs to the transposase 11 family.

In terms of biological role, involved in the transposition of the insertion sequence. This Bacillus thuringiensis subsp. finitimus protein is Transposase for insertion sequence element IS231E.